We begin with the raw amino-acid sequence, 368 residues long: Phosphate acyltransferase (368 aa).

The tract at residues 337–368 (LEQAARDASGAGQASPIAGQPAEPYAAQSSKA) is disordered.

Belongs to the PlsX family. Homodimer. Probably interacts with PlsY.

The protein resides in the cytoplasm. The enzyme catalyses a fatty acyl-[ACP] + phosphate = an acyl phosphate + holo-[ACP]. It functions in the pathway lipid metabolism; phospholipid metabolism. In terms of biological role, catalyzes the reversible formation of acyl-phosphate (acyl-PO(4)) from acyl-[acyl-carrier-protein] (acyl-ACP). This enzyme utilizes acyl-ACP as fatty acyl donor, but not acyl-CoA. This Paraburkholderia phytofirmans (strain DSM 17436 / LMG 22146 / PsJN) (Burkholderia phytofirmans) protein is Phosphate acyltransferase.